Reading from the N-terminus, the 286-residue chain is Acetylglutamate kinase (286 aa).

Substrate-binding positions include 70–71, R92, and N184; that span reads GG.

Belongs to the acetylglutamate kinase family. ArgB subfamily.

The protein localises to the cytoplasm. It catalyses the reaction N-acetyl-L-glutamate + ATP = N-acetyl-L-glutamyl 5-phosphate + ADP. The protein operates within amino-acid biosynthesis; L-arginine biosynthesis; N(2)-acetyl-L-ornithine from L-glutamate: step 2/4. Functionally, catalyzes the ATP-dependent phosphorylation of N-acetyl-L-glutamate. The polypeptide is Acetylglutamate kinase (Ruegeria sp. (strain TM1040) (Silicibacter sp.)).